We begin with the raw amino-acid sequence, 610 residues long: Elongation factor 4 (610 aa).

Residues 11 to 193 (EKIRNFSIIA…QIVEKVPAPT (183 aa)) form the tr-type G domain. GTP contacts are provided by residues 23 to 28 (DHGKST) and 140 to 143 (NKID).

The protein belongs to the TRAFAC class translation factor GTPase superfamily. Classic translation factor GTPase family. LepA subfamily.

The protein localises to the cell membrane. It catalyses the reaction GTP + H2O = GDP + phosphate + H(+). Functionally, required for accurate and efficient protein synthesis under certain stress conditions. May act as a fidelity factor of the translation reaction, by catalyzing a one-codon backward translocation of tRNAs on improperly translocated ribosomes. Back-translocation proceeds from a post-translocation (POST) complex to a pre-translocation (PRE) complex, thus giving elongation factor G a second chance to translocate the tRNAs correctly. Binds to ribosomes in a GTP-dependent manner. The sequence is that of Elongation factor 4 from Streptococcus pyogenes serotype M6 (strain ATCC BAA-946 / MGAS10394).